A 287-amino-acid polypeptide reads, in one-letter code: MAIRNFRPYTPGTRTRVVTDFSEVTGRKPERSLVVSKHRRKGRNNRGVITCRHRGGGHKRLYRVVDFRRNKHGITAKVAAIHYDPHRNARLALLFYADGEKRYILAPAGVQVGQTVVSGPDAPIENGNAMPLSAVPLGSSVHCVELYAGRGGQMVRTAGASAQVMAKEGDYVALKLPSTEVRLVRRECYATLGEVGNSEVRNTSLGKAGRRRWLGRRPQVRGSVMNPCDHPHGGGEGRAPIGRSGPVTPWGKPALGLKTRKRNKPSNRYVLRKRRKTSKRSRGGRDS.

The segment at 221–287 (RGSVMNPCDH…SKRSRGGRDS (67 aa)) is disordered. The span at 258–287 (KTRKRNKPSNRYVLRKRRKTSKRSRGGRDS) shows a compositional bias: basic residues.

It belongs to the universal ribosomal protein uL2 family. As to quaternary structure, part of the 50S ribosomal subunit. Forms a bridge to the 30S subunit in the 70S ribosome.

In terms of biological role, one of the primary rRNA binding proteins. Required for association of the 30S and 50S subunits to form the 70S ribosome, for tRNA binding and peptide bond formation. It has been suggested to have peptidyltransferase activity; this is somewhat controversial. Makes several contacts with the 16S rRNA in the 70S ribosome. This is Large ribosomal subunit protein uL2 from Parasynechococcus marenigrum (strain WH8102).